Reading from the N-terminus, the 369-residue chain is Iron-sulfur cluster carrier protein (369 aa).

ATP is bound at residue 115–122 (GKGGVGKS).

It belongs to the Mrp/NBP35 ATP-binding proteins family. In terms of assembly, homodimer. Holo-ApbC forms a mixture of homodimers and homotetramers.

In terms of biological role, binds and transfers iron-sulfur (Fe-S) clusters to target apoproteins. Can hydrolyze ATP. Both activities are required for function in vivo, but the ability to hydrolyze ATP is not necessary for Fe-S cluster transfer. The sequence is that of Iron-sulfur cluster carrier protein from Salmonella typhimurium (strain LT2 / SGSC1412 / ATCC 700720).